A 149-amino-acid polypeptide reads, in one-letter code: Flagellar assembly factor FliW (149 aa).

Belongs to the FliW family. As to quaternary structure, interacts with translational regulator CsrA and flagellin(s).

The protein localises to the cytoplasm. Acts as an anti-CsrA protein, binds CsrA and prevents it from repressing translation of its target genes, one of which is flagellin. Binds to flagellin and participates in the assembly of the flagellum. The protein is Flagellar assembly factor FliW of Thermotoga neapolitana (strain ATCC 49049 / DSM 4359 / NBRC 107923 / NS-E).